A 201-amino-acid chain; its full sequence is dITP/XTP pyrophosphatase (201 aa).

7–12 (TNNKGK) contacts substrate. Glu40 and Asp69 together coordinate Mg(2+). Catalysis depends on Asp69, which acts as the Proton acceptor. Residues Ser70, 152–155 (FGYD), Lys175, and 180–181 (HR) contribute to the substrate site.

This sequence belongs to the HAM1 NTPase family. Homodimer. Requires Mg(2+) as cofactor.

It catalyses the reaction XTP + H2O = XMP + diphosphate + H(+). The catalysed reaction is dITP + H2O = dIMP + diphosphate + H(+). The enzyme catalyses ITP + H2O = IMP + diphosphate + H(+). Pyrophosphatase that catalyzes the hydrolysis of nucleoside triphosphates to their monophosphate derivatives, with a high preference for the non-canonical purine nucleotides XTP (xanthosine triphosphate), dITP (deoxyinosine triphosphate) and ITP. Seems to function as a house-cleaning enzyme that removes non-canonical purine nucleotides from the nucleotide pool, thus preventing their incorporation into DNA/RNA and avoiding chromosomal lesions. The chain is dITP/XTP pyrophosphatase from Desulforamulus reducens (strain ATCC BAA-1160 / DSM 100696 / MI-1) (Desulfotomaculum reducens).